The primary structure comprises 89 residues: UPF0213 protein LSEI_1587 (89 aa).

One can recognise a GIY-YIG domain in the interval 4 to 79 (KTYYFYVLLC…KHQTRHRKEV (76 aa)).

This sequence belongs to the UPF0213 family.

This Lacticaseibacillus paracasei (strain ATCC 334 / BCRC 17002 / CCUG 31169 / CIP 107868 / KCTC 3260 / NRRL B-441) (Lactobacillus paracasei) protein is UPF0213 protein LSEI_1587.